An 82-amino-acid chain; its full sequence is Large ribosomal subunit protein uL23 (82 aa).

Belongs to the universal ribosomal protein uL23 family. In terms of assembly, part of the 50S ribosomal subunit. Contacts protein L29.

Functionally, binds to 23S rRNA. One of the proteins that surrounds the polypeptide exit tunnel on the outside of the ribosome. This is Large ribosomal subunit protein uL23 from Methanospirillum hungatei JF-1 (strain ATCC 27890 / DSM 864 / NBRC 100397 / JF-1).